A 311-amino-acid chain; its full sequence is Malate dehydrogenase (311 aa).

Residues 7–13 and aspartate 34 contribute to the NAD(+) site; that span reads GAAGGIG. Residues arginine 81 and arginine 87 each contribute to the substrate site. Residues asparagine 94 and 117–119 each bind NAD(+); that span reads ITN. Substrate-binding residues include asparagine 119 and arginine 153. Histidine 177 (proton acceptor) is an active-site residue. Position 227 (methionine 227) interacts with NAD(+).

The protein belongs to the LDH/MDH superfamily. MDH type 1 family. As to quaternary structure, homodimer.

It carries out the reaction (S)-malate + NAD(+) = oxaloacetate + NADH + H(+). Its function is as follows. Catalyzes the reversible oxidation of malate to oxaloacetate. In Vibrio atlanticus (strain LGP32) (Vibrio splendidus (strain Mel32)), this protein is Malate dehydrogenase.